The sequence spans 427 residues: Light-independent protochlorophyllide reductase subunit N (427 aa).

[4Fe-4S] cluster-binding residues include cysteine 29, cysteine 54, and cysteine 115.

The protein belongs to the BchN/ChlN family. In terms of assembly, protochlorophyllide reductase is composed of three subunits; BchL, BchN and BchB. Forms a heterotetramer of two BchB and two BchN subunits. It depends on [4Fe-4S] cluster as a cofactor.

The enzyme catalyses chlorophyllide a + oxidized 2[4Fe-4S]-[ferredoxin] + 2 ADP + 2 phosphate = protochlorophyllide a + reduced 2[4Fe-4S]-[ferredoxin] + 2 ATP + 2 H2O. Its pathway is porphyrin-containing compound metabolism; bacteriochlorophyll biosynthesis (light-independent). Functionally, component of the dark-operative protochlorophyllide reductase (DPOR) that uses Mg-ATP and reduced ferredoxin to reduce ring D of protochlorophyllide (Pchlide) to form chlorophyllide a (Chlide). This reaction is light-independent. The NB-protein (BchN-BchB) is the catalytic component of the complex. This Bradyrhizobium sp. (strain ORS 278) protein is Light-independent protochlorophyllide reductase subunit N.